The following is a 149-amino-acid chain: Ribonuclease H (149 aa).

The region spanning 1-141 (MKTVTLFSDG…CDTMAREKAT (141 aa)) is the RNase H type-1 domain. Asp9, Glu47, Asp69, and Asp133 together coordinate Mg(2+).

The protein belongs to the RNase H family. Monomer. Requires Mg(2+) as cofactor.

It localises to the cytoplasm. The enzyme catalyses Endonucleolytic cleavage to 5'-phosphomonoester.. Its function is as follows. Endonuclease that specifically degrades the RNA of RNA-DNA hybrids. The protein is Ribonuclease H of Campylobacter curvus (strain 525.92).